Here is a 185-residue protein sequence, read N- to C-terminus: Ribosome-recycling factor (185 aa).

The protein belongs to the RRF family.

It is found in the cytoplasm. In terms of biological role, responsible for the release of ribosomes from messenger RNA at the termination of protein biosynthesis. May increase the efficiency of translation by recycling ribosomes from one round of translation to another. The sequence is that of Ribosome-recycling factor from Pseudomonas fluorescens (strain Pf0-1).